The chain runs to 1147 residues: SR-related and CTD-associated factor 4 (1147 aa).

The region spanning 1 to 139 (MDAVNAFNQE…PLLDMAAGTS (139 aa)) is the CID domain. An N6-acetyllysine modification is found at Lys-49. Disordered regions lie at residues 145-179 (AENV…AVPQ), 235-254 (KTTP…PEQK), 269-331 (DEPE…QQPA), and 424-502 (VKRH…KPET). Position 154 is a phosphoserine (Ser-154). Low complexity-rich tracts occupy residues 283–292 (TAVTTTAPAA) and 299–310 (TATVPAAAAPAA). Over residues 424 to 433 (VKRHMSDNRK) the composition is skewed to basic and acidic residues. Residues 434-475 (SRSRSASRSPKRRRSRSGSRSRRSRHRRSRSRSRDRRRHSPR) are compositionally biased toward basic residues. Residues 477 to 492 (RSQERRDREKERERRQ) show a composition bias toward basic and acidic residues. Residues 508–582 (TTLWVGQLDK…KSIKIAWALN (75 aa)) enclose the RRM domain. 2 disordered regions span residues 629–661 (DWKG…IPKP) and 879–1147 (RPMP…EAPR). Ser-656 carries the post-translational modification Phosphoserine. The span at 879–913 (RPMPPHMMHRGPPPGPGGFAMPPPHGMKGPFPPHG) shows a compositional bias: pro residues. Over residues 941-965 (QQPPQQPQQQPQPQAPQQPQQQQQQ) the composition is skewed to low complexity. The segment covering 966–977 (QPPPSQQPPPTQ) has biased composition (pro residues). Ser-1004 is modified (phosphoserine). Over residues 1009 to 1085 (VENDRERYGN…RGKEKPEVTD (77 aa)) the composition is skewed to basic and acidic residues.

As to quaternary structure, interacts with POLR2A; via C-terminal heptapeptide repeat domain (CTD) phosphorylated at 'Ser-2' and 'Ser-5'.

The protein localises to the nucleus. Its function is as follows. Anti-terminator protein required to prevent early mRNA termination during transcription. Together with SCAF8, acts by suppressing the use of early, alternative poly(A) sites, thereby preventing the accumulation of non-functional truncated proteins. Mechanistically, associates with the phosphorylated C-terminal heptapeptide repeat domain (CTD) of the largest RNA polymerase II subunit (POLR2A), and subsequently binds nascent RNA upstream of early polyadenylation sites to prevent premature mRNA transcript cleavage and polyadenylation. Independently of SCAF8, also acts as a suppressor of transcriptional readthrough. The polypeptide is SR-related and CTD-associated factor 4 (Homo sapiens (Human)).